The sequence spans 711 residues: Choline transporter-like protein 2 (711 aa).

Residues 1 to 33 (MGDERPHYYGKHGTPQKYDPTFKGPIYNRGCTD) lie on the Cytoplasmic side of the membrane. Thr-14 is modified (phosphothreonine). A helical transmembrane segment spans residues 34-54 (VICCVFLLVAIVGYVAVGIIA). Residues 55–232 (WTHGDPRKVI…RIFEDYTVSW (178 aa)) are Extracellular-facing. Residues Asn-187 and Asn-200 are each glycosylated (N-linked (GlcNAc...) asparagine). Residues 233–253 (YWIIIGLVIAMAMSLLFIILL) traverse the membrane as a helical segment. Residues 254–256 (RFL) are Cytoplasmic-facing. The chain crosses the membrane as a helical span at residues 257 to 277 (AGIMVWVMIIMVILVLGYGIF). The Extracellular segment spans residues 278 to 315 (HCYMEYSRLRGEAGSDVSLVDLGFQTDFRVYLHLRQTW). The chain crosses the membrane as a helical span at residues 316 to 336 (LAFMIILSILEVIIILLLIFL). Residues 337–364 (RKRILIAIALIKEASRAVGYVMCTMLYP) are Cytoplasmic-facing. A helical membrane pass occupies residues 365–385 (LVTFFLLCLCIAYWASTAVFL). Over 386 to 440 (STSNEAVYKIFDDGLCPFTAKTCNPETFPSSNESRQCPNARCQFAFYGGESGYHR) the chain is Extracellular. An N-linked (GlcNAc...) asparagine glycan is attached at Asn-417. The chain crosses the membrane as a helical span at residues 441–461 (ALLGLQIFNAFMFFWLANFVL). Topologically, residues 462-504 (ALGQVTLAGAFASYYWALRKPDDLPAFPLFSAFGRALRYHTGS) are cytoplasmic. Residues 505-525 (LAFGALILAIVQIIRVILEYL) traverse the membrane as a helical segment. The Extracellular segment spans residues 526 to 563 (DQRLKAAENKFAKCLMTCLKCCFWCLEKFIKFLNRNAY). The chain crosses the membrane as a helical span at residues 564-584 (IMIAIYGTNFCTSARNAFFLL). The Cytoplasmic portion of the chain corresponds to 585–599 (MRNIIRVAVLDKVTD). Residues 600–620 (FLFLLGKLLIVGSVGILAFFF) traverse the membrane as a helical segment. Topologically, residues 621-638 (FTHRIRIVQDTAPPLNYY) are extracellular. Residues 639-659 (WVPILTVIVGSYLIAHGFFSV) traverse the membrane as a helical segment. Over 660–711 (YGMCVDTLFLCFCEDLERNDGSQERPYFMSPELRDILLKGSAEEGKRAEAEE) the chain is Cytoplasmic.

It belongs to the CTL (choline transporter-like) family. Interacts with COCH. Post-translationally, N-glycosylated.

Its subcellular location is the cell membrane. It localises to the mitochondrion outer membrane. The enzyme catalyses choline(out) + n H(+)(in) = choline(in) + n H(+)(out). It catalyses the reaction ethanolamine(out) + n H(+)(in) = ethanolamine(in) + n H(+)(out). In terms of biological role, choline/H+ antiporter, mainly in mitochodria. Also acts as a low-affinity ethanolamine/H+ antiporter, regulating the supply of extracellular ethanolamine (Etn) for the CDP-Etn pathway, redistribute intracellular Etn and balance the CDP-Cho and CDP-Etn arms of the Kennedy pathway. The chain is Choline transporter-like protein 2 (SLC44A2) from Pongo abelii (Sumatran orangutan).